A 284-amino-acid chain; its full sequence is NADH-cytochrome b5 reductase 1 (284 aa).

The helical transmembrane segment at 7–27 (KLVVVIVIVVVPLLFKFIIGP) threads the bilayer. The 105-residue stretch at 38 to 142 (NDFQSFPLVE…KGPRGNYHYE (105 aa)) folds into the FAD-binding FR-type domain. FAD contacts are provided by residues 122–137 (GELKIGDSIQIKGPRG) and 148–180 (HLGMIAGGTGIAPMYQIMKAIAMDPHDTTKVSL).

This sequence belongs to the flavoprotein pyridine nucleotide cytochrome reductase family. As to quaternary structure, monomer. Component of the 2-(3-amino-3-carboxypropyl)histidine synthase complex composed of DPH1, DPH2, KTI11/DPH3 and a NADH-dependent reductase, predominantly CBR1. Interacts with KTI11/DPH3. Interacts with STE20. It depends on FAD as a cofactor.

It is found in the mitochondrion outer membrane. It catalyses the reaction 2 Fe(III)-[cytochrome b5] + NADH = 2 Fe(II)-[cytochrome b5] + NAD(+) + H(+). The enzyme catalyses 2 Fe(3+)-[Dph3] + NADH = 2 Fe(2+)-[Dph3] + NAD(+) + H(+). Its pathway is protein modification; peptidyl-diphthamide biosynthesis. Competitively inhibited by NAD(+). Inhibited by mercurials such as p-chloromercuribenzoate (PCMB) and HgCl(2). Enzymatic activity increases under anaerobic conditions. NADH-dependent reductase for KTI11/DPH3 and cytochrome b5. Required for the first step of diphthamide biosynthesis, a post-translational modification of histidine which occurs in elongation factor 2. DPH1 and DPH2 transfer a 3-amino-3-carboxypropyl (ACP) group from S-adenosyl-L-methionine (SAM) to a histidine residue, the reaction is assisted by a reduction system comprising KTI11/DPH3 and a NADH-dependent reductase, predominantly CBR1. By reducing KTI11/DPH3, also involved in the formation of the tRNA wobble base modification mcm5s 2U (5-methoxycarbonylmethyl-2-thiouridine), mediated by the elongator complex. The cytochrome b5/NADH cytochrome b5 reductase electron transfer system supports the catalytic activity of several sterol biosynthetic enzymes. Plays a role in bud morphology. The sequence is that of NADH-cytochrome b5 reductase 1 (CBR1) from Saccharomyces cerevisiae (strain ATCC 204508 / S288c) (Baker's yeast).